Consider the following 315-residue polypeptide: Adenine deaminase (315 aa).

H14, H16, and H194 together coordinate Zn(2+). Catalysis depends on E197, which acts as the Proton donor. Residue D275 participates in Zn(2+) binding. D276 contacts substrate.

This sequence belongs to the metallo-dependent hydrolases superfamily. Adenosine and AMP deaminases family. Adenine deaminase type 2 subfamily. The cofactor is Zn(2+).

It catalyses the reaction adenine + H2O + H(+) = hypoxanthine + NH4(+). Catalyzes the hydrolytic deamination of adenine to hypoxanthine. Plays an important role in the purine salvage pathway and in nitrogen catabolism. In Pseudomonas putida (strain W619), this protein is Adenine deaminase.